The primary structure comprises 131 residues: Lactose permease (131 aa).

Over 1 to 13 (MKFSELAPRERHN) the chain is Cytoplasmic. The helical transmembrane segment at 14 to 34 (FVYFLLFFFFYHFIMSAYFPF) threads the bilayer. The Periplasmic portion of the chain corresponds to 35–50 (FPVWLADVNHLTKTET). The chain crosses the membrane as a helical span at residues 51 to 71 (GIVFSSISLFAIIFQPVFGLM). Over 72-80 (SDKLGLRKH) the chain is Cytoplasmic. Residues 81-101 (LLWTITVLLILFAPFFIFVFS) traverse the membrane as a helical segment. Pro102 is a topological domain (periplasmic). A helical membrane pass occupies residues 103-123 (LLQMNIIAGSLVGGIYLGIVF). Topologically, residues 124 to 131 (STAPGVGS) are cytoplasmic.

This sequence belongs to the major facilitator superfamily. Oligosaccharide:H(+) symporter (OHS) (TC 2.A.1.5) family.

It localises to the cell inner membrane. It catalyses the reaction lactose(in) + H(+)(in) = lactose(out) + H(+)(out). In terms of biological role, responsible for transport of beta-galactosides into the cell, with the concomitant import of a proton (symport system). In Klebsiella pneumoniae, this protein is Lactose permease (lacY).